The following is a 287-amino-acid chain: NAD-dependent protein deacylase sir-2.3 (287 aa).

Positions 10–287 constitute a Deacetylase sirtuin-type domain; the sequence is TELCENSLKK…YRISDVLKEM (278 aa). NAD(+) contacts are provided by residues 35-55 and 116-119; these read GAGI…VGLY and QNVD. Catalysis depends on His-134, which acts as the Proton acceptor. Zn(2+) is bound by residues Cys-142, Cys-145, Cys-196, and Cys-199. Residues 236–238, 262–264, and Ile-280 each bind NAD(+); these read GTS and NIG.

The protein belongs to the sirtuin family. Class II subfamily. In terms of assembly, interacts with pyc-1, pcca-1 and mccc-1. It depends on Zn(2+) as a cofactor. Ubiquitously expressed with high expression in the pharynx, body wall muscles and gonad. Strong expression in a subset of non-neuronal cells in the head.

It localises to the mitochondrion matrix. It is found in the mitochondrion. It carries out the reaction N(6)-acetyl-L-lysyl-[protein] + NAD(+) + H2O = 2''-O-acetyl-ADP-D-ribose + nicotinamide + L-lysyl-[protein]. In terms of biological role, NAD-dependent protein deacylase. Catalyzes the NAD-dependent hydrolysis of acyl groups from lysine residues. Plays a role in oxidative stress resistance. Might promote neuronal cell death under ischemic conditions and cell death in touch neurons induced by mec-4 channel hyperactivation, possibly downstream of the insulin-like receptor daf-2. Might attenuate the reactive oxygen species (ROS) scavenging system, that eliminates ROS in ischemic conditions, under dietary deprivation and when glycolysis is blocked. This chain is NAD-dependent protein deacylase sir-2.3 (sir-2.3), found in Caenorhabditis elegans.